The chain runs to 511 residues: Histidine ammonia-lyase (511 aa).

The segment at residues 143-145 is a cross-link (5-imidazolinone (Ala-Gly)); it reads ASG. 2,3-didehydroalanine (Ser) is present on Ser-144.

Belongs to the PAL/histidase family. Post-translationally, contains an active site 4-methylidene-imidazol-5-one (MIO), which is formed autocatalytically by cyclization and dehydration of residues Ala-Ser-Gly.

The protein resides in the cytoplasm. The enzyme catalyses L-histidine = trans-urocanate + NH4(+). The protein operates within amino-acid degradation; L-histidine degradation into L-glutamate; N-formimidoyl-L-glutamate from L-histidine: step 1/3. The sequence is that of Histidine ammonia-lyase from Idiomarina loihiensis (strain ATCC BAA-735 / DSM 15497 / L2-TR).